A 341-amino-acid chain; its full sequence is UDP-3-O-acylglucosamine N-acyltransferase (341 aa).

His-241 functions as the Proton acceptor in the catalytic mechanism.

The protein belongs to the transferase hexapeptide repeat family. LpxD subfamily. In terms of assembly, homotrimer.

The enzyme catalyses a UDP-3-O-[(3R)-3-hydroxyacyl]-alpha-D-glucosamine + a (3R)-hydroxyacyl-[ACP] = a UDP-2-N,3-O-bis[(3R)-3-hydroxyacyl]-alpha-D-glucosamine + holo-[ACP] + H(+). Its pathway is bacterial outer membrane biogenesis; LPS lipid A biosynthesis. Functionally, catalyzes the N-acylation of UDP-3-O-acylglucosamine using 3-hydroxyacyl-ACP as the acyl donor. Is involved in the biosynthesis of lipid A, a phosphorylated glycolipid that anchors the lipopolysaccharide to the outer membrane of the cell. This chain is UDP-3-O-acylglucosamine N-acyltransferase, found in Christiangramia forsetii (strain DSM 17595 / CGMCC 1.15422 / KT0803) (Gramella forsetii).